The chain runs to 2763 residues: MENYQIRTLQDQLTSSKLRDRNAGLQELQSILKDNPGFIANEQINGLLNTLLSLLENEAGKYIDSIEDDTDSRQRKENISISRFSNITYTLRLFIETVIEKFKLSHLKLTISAVKDLFYNDARIIVPVINDVTYCILAIVKSEIFGNKIGPSQWLDVAEYTLWLIKITSSNRSNIRALTNSLDTFYVLLIKGSISLSKVAKEALVIITNLIVFEKGETATTNVLLSISSNLVARLHCQHYYDTTSLIIECWKLYTRIGKTNNFNLLNDISKIDIFGGGLLQNQIPIMPGQEIMGSRISHSVVLSTLQDYIPMKVKEMLDVDHSLTIGIYDDLNNSNMDLTYNTFAKTHCKDLAWLRLFGLYDTLCLYYRLSNQERENNATQILKKIKYEGSLQSNLNQCNSLLDYSQSLLESGDPLIQLLGCKLFFLLNLDHPIACNTELIDRLCINTNNISLTSWHLACIFTNISYDLWNFDETLYLKVLKYITPLLSTSEVNIMACLIFNKLLHSLTREPIDELSSLVNSIIASPDSVLPIEISSVTCEAWQHIFVFAINNLKVDNSLLLDSFSKWINHNITQTIHIEHLKLIFEFFLWSLDVVVGSTSHNKQHNTYNLLNLKTSDSALAIWYFYENQRKFLTQTIQTSSQASVNTKSMVCPITSTNIKIQWLLNIIDNYFTTSKNHSLKYTFAISLIYFINFIEKSGKVYTYLNQELNQRLNSILIELDFLSFDKWEEGKQFIEIICNQETFFNRLHNDVVFKDNILLSLINLFEKEYSHFLNADNGSTAKTGNDIYLNQRSILRFRTDIKLMTQFFTCVDSNVPGKIGIYLDRLLLYSMGPNESLVLDELLSWVTNPSNNQYYEVHSLEKLCQFLAKSLLNSKYQLSDFSMIRLGLFLTSTIELWVNVKYNILNSDCNDFLIWITNNLVQNNFGETGTFVVLIRLFISVLKHNSTVNSSCAIKTQDLYSMLIFCMRNVAYSTLGNIVDELKAYMSKKSHKNRKTILDDLVELFEPMPESVEKAASSCFVLFGLLDCNDTNFVYTLDIFSNYGNIPHISFFLKKAVKNYVNNYYQGNKIQLLNVHILEVIRQWTKRNDTDRQLYFNSVIGSLFGFGSIQEFERQYNREICALIFSRSDSESLERNFFSDRNTSKCEMLRRSLYLLIPLSYYDNGVGDMVFNKLKDSFRGQLESVLSSNFIIVMRYALKLCDCSDYTSVLNEMQRPNQSSSLLELFMDSEMKNAINRMNIYITVHSVIKIFKNCGRSRQTLLLDLRTLILWIISDIQKSESSWEQNNHLRQLQLLVFLYEDTFLQSVLHIELMNWLSYLLKIENIEADVFLLLNCLLSLIKPNSLDKPDSLTLFFLNVLHFYVRNKECLKIGDEDMNMLSNNLSTVNSIALKLLTNGQVTDLIYNQVGDLTSQMYFAEEVELFALLMTFAPPMPDYVSHKMNKKFIEYVYKSNNLIDIDNFSLWFSDYSTQYSSLILELEENSSFCEKDGFGIDDMEIVYDFSDSAVSAMYSVLFRSLISIKPTIGFKSFALSNIICHLISINILKDKDLLSKFLRATKMKIAFSAKEIDETIIEHFGKSNCGCVISEHYLESEFFDTNIPYKDWLVKLCMFFISQISLNSKEIQWFIPLCYESMDFCKQNVCIFFLAAFSFDHRRMSSTWKHIFSRLNDLTMASDCLAKLTLLLSFIRLIRSGALQGRKEYSNLYQKIEFKGVIDAALKIKDSKFALQLFEEAYMCENGDYDVALLTSIYEQLDDVDMLYALPTPISLNGFIKNANRLSPHSLKALQLNGAYFDANFNHLVDNGSHQLVNTLTGMGFNALADIADLRTSCDNPADAYLRCLQLDKWDLPKPKAIDCKIVSFYNTAYDLRNTNIEFVDLLQNAEIQLYKAKANFSSKLEWFETIREYVKTKRAIISLKTDTDISRFKIDHVINPDRYLENALISDIKINWQFRYLMLKIYVEREKFANEAMKCIPILELIHQTELSVDFHIQQTSLSRILSMEAAMKRFHIADTNLVEQLSRHVSYVTALALREFGETKAPLTILSKLLSDKSYKLNYNTFVSDDEVRAQLIWDSYQAKVKSGIQIFENDVEHWDVSINNIRSAPDTIYKVANFLNLEISRLNGSDQLKEKQKSYRRTRQELKDIESVVKSSNLSNEELLVGQKHYHNLKTHMENDRLAIENICLTRKKLIKRALDYYVQILILTNNYDYDVLDRFCGLWFENDDDDDINTDLTSKLSQIPTWKFLPWVNQFTSKLSLLKSKFQKQLWYIMKRLLYKLPFETGYAVINLQLYEKYSDKLDEKISEKIKAANLIFDQLQNSQISVKEGEYLRTIQEFCYATLEIAELKVKGKNAQISLETLNIGRYWITELPKKNLPLPTVTRTINSSQYTLDSSRNIVKVIGNITITSTGLSLPKVMTLLLSDGSRHKVVIKYGSDDLRQDAIMEQVFQQVNKIFGKDVEMRRSDLHMRTYNVVPLGPKAGLIEFVNNSLSLHSILTDIHKDDNYSWLEARRSMKDVQSKSDKERILTYLDITKKISPKFRNFFFNSFIDANGWICAKRKYTKGVATSSMVGYILGLGDRHLNNILIDTTTGEPIHIDLGIAFDQGRLLKIPELVPFRLTRDIIDGFGITGVEGIFRRTCEQVLNVLSRDSEKVMCVLNILKWDPLYSWAVSPFKKHKYMYDDNLEGHMTTATNNSKVIERKLTPKLDSDENQQSYRALKGVQEKLDRNGLTIEATVEKLIQEAVDESNLALIFNGWSPFY.

Residues 1715 to 2294 form the FAT domain; sequence GVIDAALKIK…GYAVINLQLY (580 aa). Positions 2403–2712 constitute a PI3K/PI4K catalytic domain; it reads IGNITITSTG…RKLTPKLDSD (310 aa). Residues 2409–2415 form a G-loop region; the sequence is TSTGLSL. A catalytic loop region spans residues 2578–2586; that stretch reads GLGDRHLNN. The segment at 2598 to 2622 is activation loop; the sequence is HIDLGIAFDQGRLLKIPELVPFRLT. An FATC domain is found at 2731-2763; the sequence is NGLTIEATVEKLIQEAVDESNLALIFNGWSPFY.

It belongs to the PI3/PI4-kinase family. ATM subfamily. In terms of assembly, associates with DNA double-strand breaks.

The protein localises to the nucleus. Its subcellular location is the chromosome. The protein resides in the telomere. It catalyses the reaction L-seryl-[protein] + ATP = O-phospho-L-seryl-[protein] + ADP + H(+). The catalysed reaction is L-threonyl-[protein] + ATP = O-phospho-L-threonyl-[protein] + ADP + H(+). Serine/threonine protein kinase which activates checkpoint signaling upon genotoxic stresses such as ionizing radiation (IR), ultraviolet light (UV), or DNA replication stalling, thereby acting as a DNA damage sensor. Recognizes the substrate consensus sequence [ST]-Q. Phosphorylates histone H2A to form H2AS128ph (gamma-H2A) at sites of DNA damage, involved in the regulation of DNA damage response mechanism. Required for the control of telomere length and genome stability. In Candida glabrata (strain ATCC 2001 / BCRC 20586 / JCM 3761 / NBRC 0622 / NRRL Y-65 / CBS 138) (Yeast), this protein is Serine/threonine-protein kinase TEL1 (TEL1).